A 297-amino-acid polypeptide reads, in one-letter code: 4-diphosphocytidyl-2-C-methyl-D-erythritol kinase (297 aa).

Residues Lys6 and Asp144 contribute to the active site.

The protein belongs to the GHMP kinase family. IspE subfamily.

The catalysed reaction is 4-CDP-2-C-methyl-D-erythritol + ATP = 4-CDP-2-C-methyl-D-erythritol 2-phosphate + ADP + H(+). Its pathway is isoprenoid biosynthesis; isopentenyl diphosphate biosynthesis via DXP pathway; isopentenyl diphosphate from 1-deoxy-D-xylulose 5-phosphate: step 3/6. Functionally, catalyzes the phosphorylation of the position 2 hydroxy group of 4-diphosphocytidyl-2C-methyl-D-erythritol. The sequence is that of 4-diphosphocytidyl-2-C-methyl-D-erythritol kinase from Leptospira interrogans serogroup Icterohaemorrhagiae serovar copenhageni (strain Fiocruz L1-130).